The primary structure comprises 101 residues: Small ribosomal subunit protein uS14 (101 aa).

It belongs to the universal ribosomal protein uS14 family. As to quaternary structure, part of the 30S ribosomal subunit. Contacts proteins S3 and S10.

Binds 16S rRNA, required for the assembly of 30S particles and may also be responsible for determining the conformation of the 16S rRNA at the A site. This chain is Small ribosomal subunit protein uS14, found in Aliivibrio salmonicida (strain LFI1238) (Vibrio salmonicida (strain LFI1238)).